Consider the following 163-residue polypeptide: Probable protein tyrosine phosphatase type IVA B (163 aa).

Residues 10–161 form the Tyrosine-protein phosphatase domain; sequence TIIESSTHKF…YKASKKAGCK (152 aa). The cysteines at positions 49 and 104 are disulfide-linked. Residue Asp70 is the Proton donor of the active site. The active-site Phosphocysteine intermediate is the Cys104. Phosphate is bound at residue 105–110; that stretch reads IAGLGR. Substrate is bound at residue Arg110. A Cysteine methyl ester modification is found at Cys160. Residue Cys160 is the site of S-farnesyl cysteine attachment. Residues 161 to 163 constitute a propeptide, removed in mature form; the sequence is KIM.

Belongs to the protein-tyrosine phosphatase family.

It is found in the membrane. The enzyme catalyses O-phospho-L-tyrosyl-[protein] + H2O = L-tyrosyl-[protein] + phosphate. The chain is Probable protein tyrosine phosphatase type IVA B from Dictyostelium discoideum (Social amoeba).